A 67-amino-acid polypeptide reads, in one-letter code: MKKGTKVIVQRDETKHPSKGTWPMFRGRKGVVTCEVRGAGPVEYGVSFSGGDSADAYFKRYELTERK.

The protein is Gene 51 protein (51) of Mycobacterium (Mycobacteriophage L5).